The following is a 159-amino-acid chain: MSDNEALDVEDYAQAGSGASLTFPIQCSALRKNGFVVIKGFPCKIVDMSTSKTGKHGHAKVNITAIDIFTGKKYEEICPSTHNIDVPNVSRKEYTVMDVQDGYLSLLDAGGEVKEDLALPEDDIGKEITQMLKEGKEPLVSVISALGKEGVVSVKVSNN.

Position 55 is a hypusine (K55).

This sequence belongs to the eIF-5A family. In terms of processing, lys-55 undergoes hypusination, a unique post-translational modification that consists in the addition of a butylamino group from spermidine to lysine side chain, leading to the formation of the unusual amino acid hypusine. eIF-5As are the only known proteins to undergo this modification, which is essential for their function.

It is found in the cytoplasm. Its function is as follows. Translation factor that promotes translation elongation and termination, particularly upon ribosome stalling at specific amino acid sequence contexts. Binds between the exit (E) and peptidyl (P) site of the ribosome and promotes rescue of stalled ribosome: specifically required for efficient translation of polyproline-containing peptides as well as other motifs that stall the ribosome. Acts as a ribosome quality control (RQC) cofactor by joining the RQC complex to facilitate peptidyl transfer during CAT tailing step. The polypeptide is Eukaryotic translation initiation factor 5A (eif5a) (Dictyostelium discoideum (Social amoeba)).